Here is a 181-residue protein sequence, read N- to C-terminus: uncharacterized protein (181 aa).

The chain crosses the membrane as a helical span at residues 133–153 (MCVCVHVCACVYVCMCVLVCM).

It is found in the membrane. This is an uncharacterized protein from Homo sapiens (Human).